Reading from the N-terminus, the 84-residue chain is Acyl carrier protein (84 aa).

Residues 6–81 (EEILTGLAEI…DAVDYIANAT (76 aa)) form the Carrier domain. The residue at position 41 (Ser41) is an O-(pantetheine 4'-phosphoryl)serine.

Belongs to the acyl carrier protein (ACP) family. Post-translationally, 4'-phosphopantetheine is transferred from CoA to a specific serine of apo-ACP by AcpS. This modification is essential for activity because fatty acids are bound in thioester linkage to the sulfhydryl of the prosthetic group.

Its subcellular location is the cytoplasm. Its pathway is lipid metabolism; fatty acid biosynthesis. In terms of biological role, carrier of the growing fatty acid chain in fatty acid biosynthesis. The polypeptide is Acyl carrier protein (Acidothermus cellulolyticus (strain ATCC 43068 / DSM 8971 / 11B)).